The primary structure comprises 1122 residues: Desmoglein-2 (1122 aa).

An N-terminal signal peptide occupies residues 1–28 (MARSPGDRCALLLLVQLLAVVCLDFGNG). Residues 29 to 54 (LHLEVFSPRNEGKPFPKHTHLVRQKR) constitute a propeptide that is removed on maturation. Cadherin domains follow at residues 55–164 (AWIT…EPVF), 165–277 (TQEV…IPVV), 278–398 (ENKM…SSVV), and 397–504 (VVSF…CPVL). At 55–618 (AWITAPVALR…YDNYVGLGPA (564 aa)) the chain is on the extracellular side. N117 carries N-linked (GlcNAc...) asparagine glycosylation. 3 N-linked (GlcNAc...) asparagine glycosylation sites follow: N314, N467, and N519. A helical membrane pass occupies residues 619-639 (AIALMILALLLLLLVPLLLLI). Over 640-1122 (CHCGGGAKGF…KHSTMQHSYS (483 aa)) the chain is Cytoplasmic. Phosphoserine is present on residues S685, S706, S709, and S729. T808 carries the post-translational modification Phosphothreonine. Phosphoserine is present on residues S810, S814, and S819. 6 Desmoglein repeat repeats span residues 885-916 (AYSS…ESSV), 917-945 (SSRQ…SYAK), 946-971 (GSAV…ERVY), 972-995 (APTS…ERVI), 996-1024 (QPNG…ERES), and 1025-1055 (ILAP…ERIL). A disordered region spans residues 913–932 (ESSVSSRQSQKVVPPPDPVA). Residues 914–924 (SSVSSRQSQKV) show a composition bias toward low complexity. The tract at residues 1089-1122 (LPNLDLEESDRPNSTITTSSTRVTKHSTMQHSYS) is disordered. Polar residues predominate over residues 1100–1122 (PNSTITTSSTRVTKHSTMQHSYS). Position 1122 is a phosphoserine (S1122).

Interacts with PKP2. Interacts with CTNNB1; the interaction promotes localization of CTNNB1 at cell junctions thus reducing its nuclear localization and subsequent transcription of CTNNB1/TCF-target genes. Palmitoylated by ZDHHC5 at the plasma membrane. Expressed in undifferentiated pluripotent stem cells, expression decreases during differentiation (at protein level). Expressed by embryonic stem cells, expression is reduced during differentiation (at protein level). Expressed at the apical-lateral cell membrane of kidney tubular epithelial cells (at protein level). Expressed in epidermis and heart (at protein level). Expressed in the brain, spleen, lung, liver skeletal muscle, kidney and testis.

The protein resides in the cell membrane. The protein localises to the cell junction. It localises to the desmosome. Its subcellular location is the cytoplasm. In terms of biological role, a component of desmosome cell-cell junctions which are required for positive regulation of cellular adhesion. Involved in the interaction of plaque proteins and intermediate filaments mediating cell-cell adhesion. Required for proliferation and viability of embryonic stem cells in the blastocyst, thereby crucial for progression of post-implantation embryonic development. Maintains pluripotency by regulating epithelial to mesenchymal transition/mesenchymal to epithelial transition (EMT/MET) via interacting with and sequestering CTNNB1 to sites of cell-cell contact, thereby reducing translocation of CTNNB1 to the nucleus and subsequent transcription of CTNNB1/TCF-target genes. Promotes pluripotency and the multi-lineage differentiation potential of hematopoietic stem cells. Plays a role in endothelial cell sprouting and elongation via mediating the junctional-association of cortical actin fibers and CDH5. Plays a role in limiting inflammatory infiltration and the apoptotic response to injury in kidney tubular epithelial cells, potentially via its role in maintaining cell-cell adhesion and the epithelial barrier. This is Desmoglein-2 (Dsg2) from Mus musculus (Mouse).